The sequence spans 324 residues: Cysteine-rich repeat secretory protein 9 (324 aa).

An N-terminal signal peptide occupies residues 1–27; the sequence is MARIIITLTIPLFYFFFFSLLSHQTMS. 2 Gnk2-homologous domains span residues 29-132 and 138-248; these read PDHI…NVSF and IVPS…TSVL. The interval 251–286 is disordered; it reads PPPSPSAPPPRSPPPKSSPPSSLPQTPSPPLVFTPP.

Belongs to the cysteine-rich repeat secretory protein family.

It localises to the secreted. The sequence is that of Cysteine-rich repeat secretory protein 9 (CRRSP9) from Arabidopsis thaliana (Mouse-ear cress).